Consider the following 307-residue polypeptide: D-alanine--D-alanine ligase (307 aa).

An ATP-grasp domain is found at 101–301; that stretch reads KTVMRAAGVS…FGELVRWMVE (201 aa). 127 to 182 provides a ligand contact to ATP; sequence PLTPPYVVKPIAEGSSMGVIIVRDERSHPPQILASDEWVYGEEVLAETYVAGRELT. Mg(2+) is bound by residues D251, E268, and N270.

This sequence belongs to the D-alanine--D-alanine ligase family. Mg(2+) serves as cofactor. The cofactor is Mn(2+).

It localises to the cytoplasm. The enzyme catalyses 2 D-alanine + ATP = D-alanyl-D-alanine + ADP + phosphate + H(+). It participates in cell wall biogenesis; peptidoglycan biosynthesis. Its function is as follows. Cell wall formation. This is D-alanine--D-alanine ligase from Methylorubrum extorquens (strain CM4 / NCIMB 13688) (Methylobacterium extorquens).